A 212-amino-acid chain; its full sequence is Uracil phosphoribosyltransferase (212 aa).

5-phospho-alpha-D-ribose 1-diphosphate is bound by residues Arg78, Arg103, and 130–138; that span reads DPMLATGSS. Uracil-binding positions include Ile193 and 198–200; that span reads GDA. Asp199 contributes to the 5-phospho-alpha-D-ribose 1-diphosphate binding site.

This sequence belongs to the UPRTase family. It depends on Mg(2+) as a cofactor.

It catalyses the reaction UMP + diphosphate = 5-phospho-alpha-D-ribose 1-diphosphate + uracil. It functions in the pathway pyrimidine metabolism; UMP biosynthesis via salvage pathway; UMP from uracil: step 1/1. Its activity is regulated as follows. Allosterically activated by GTP. Catalyzes the conversion of uracil and 5-phospho-alpha-D-ribose 1-diphosphate (PRPP) to UMP and diphosphate. The polypeptide is Uracil phosphoribosyltransferase (Pseudomonas fluorescens (strain Pf0-1)).